The primary structure comprises 339 residues: Phenylalanine--tRNA ligase alpha subunit (339 aa).

E254 contributes to the Mg(2+) binding site.

The protein belongs to the class-II aminoacyl-tRNA synthetase family. Phe-tRNA synthetase alpha subunit type 1 subfamily. As to quaternary structure, tetramer of two alpha and two beta subunits. It depends on Mg(2+) as a cofactor.

It is found in the cytoplasm. It carries out the reaction tRNA(Phe) + L-phenylalanine + ATP = L-phenylalanyl-tRNA(Phe) + AMP + diphosphate + H(+). In Alkaliphilus oremlandii (strain OhILAs) (Clostridium oremlandii (strain OhILAs)), this protein is Phenylalanine--tRNA ligase alpha subunit.